We begin with the raw amino-acid sequence, 818 residues long: MTILYKVEGKEFSKDSVFPHKKVLCSVSARNIVAFSALQSAIFPASHGGDAGDGSLPGAGLAVGASNSHVYVCDIVTPWEYYKVCSSKSLISVLQWSPNGEQLLLGYVGGRVEIWQPRNQSINLWVLQYYATVPSEDIIEAQFFQNGKGVIFNALKKDHTYYAEKFERVEQQRPTLSGFGGVASEGCVLLTSSGLLAAFSLPAIQKTSAAGADGPAHEVVELTPALHSIGISRSFIEHCSMTPSPSGALNIAFSCGWQQQLVQCFKVSLSLEGELGLEQHLAIKSESQTSIFLGPLDGRRISHLKWTRIANEDVIFIAYACPDGAGSQLEQWTLTRRHQSVHALLQGGGGANNKPNEFVQSESWEQVGKVQLNASLADISVTRLSVSTPDSCQVYAILQDNSVQVLEPNSMKQLNHTQFDRLSDASGAVKFVSGDLTPSSQILLIFDSHAQLYAMQAPLPKQGGSGLLLLEYCIVTGCDASDVLLLNLGNLEALVEKLTDNFTRQPSFVRHFYYANFLALKSNICRMQQQEFDNLIILHAISTTFKSLLRPSDLGFQDKGPADNLAIKLAESIPDVDTVMLNLDAKDFTVEPVMLQSLQQLIQWVTDLALNMLHRLPEEVMKTKLSGKRPSYDISRDIVAISSLRELLVMIRIWGLLNTQCLPVYTKTMDNIDVLVILFRLLTRLAQNPAEPDEMLLDECSLLSKQLLIPQPTKFNPTTLLSAQGFAAVKSGQLQFTSMEEPTCLQDMETEEVVFASSVKDGVSNLQLGARPSHIRRCARCGFVFVNNASKVAKTSALKAWFSKWLHCHCGGFWKQVH.

3 WD repeats span residues 86–125, 296–342, and 615–666; these read SSKSLISVLQWSPNGEQLLLGYVGGRVEIWQPRNQSINLW, LDGR…QSVH, and RLPE…PVYT. The segment at 175–524 is interaction with Dif; that stretch reads TLSGFGGVAS…ANFLALKSNI (350 aa).

This sequence belongs to the Mediator complex subunit 16 family. In terms of assembly, component of the Mediator complex. Interacts with Dif.

The protein localises to the nucleus. In terms of biological role, component of the Mediator complex, a coactivator involved in the regulated transcription of nearly all RNA polymerase II-dependent genes. Mediator functions as a bridge to convey information from gene-specific regulatory proteins to the basal RNA polymerase II transcription machinery. Mediator is recruited to promoters by direct interactions with regulatory proteins and serves as a scaffold for the assembly of a functional preinitiation complex with RNA polymerase II and the general transcription factors. Required for activated transcription of the MtnA, MtnB and MtnD genes. Required for transcriptional activation in response to lipopolysacchardie (LPS). This is Mediator of RNA polymerase II transcription subunit 16 (MED16) from Drosophila melanogaster (Fruit fly).